A 256-amino-acid polypeptide reads, in one-letter code: Pyrroloquinoline-quinone synthase (256 aa).

It belongs to the PqqC family.

It carries out the reaction 6-(2-amino-2-carboxyethyl)-7,8-dioxo-1,2,3,4,7,8-hexahydroquinoline-2,4-dicarboxylate + 3 O2 = pyrroloquinoline quinone + 2 H2O2 + 2 H2O + H(+). The protein operates within cofactor biosynthesis; pyrroloquinoline quinone biosynthesis. In terms of biological role, ring cyclization and eight-electron oxidation of 3a-(2-amino-2-carboxyethyl)-4,5-dioxo-4,5,6,7,8,9-hexahydroquinoline-7,9-dicarboxylic-acid to PQQ. The sequence is that of Pyrroloquinoline-quinone synthase from Rhizobium meliloti (strain 1021) (Ensifer meliloti).